The sequence spans 428 residues: 3-phosphoshikimate 1-carboxyvinyltransferase (428 aa).

Lysine 23, serine 24, and arginine 28 together coordinate 3-phosphoshikimate. Lysine 23 contacts phosphoenolpyruvate. 2 residues coordinate phosphoenolpyruvate: glycine 97 and arginine 125. Residues serine 170, serine 171, glutamine 172, serine 198, aspartate 314, asparagine 337, and lysine 341 each coordinate 3-phosphoshikimate. Residue glutamine 172 participates in phosphoenolpyruvate binding. The active-site Proton acceptor is aspartate 314. Phosphoenolpyruvate-binding residues include arginine 345, arginine 387, and lysine 412.

The protein belongs to the EPSP synthase family. In terms of assembly, monomer.

It localises to the cytoplasm. It carries out the reaction 3-phosphoshikimate + phosphoenolpyruvate = 5-O-(1-carboxyvinyl)-3-phosphoshikimate + phosphate. Its pathway is metabolic intermediate biosynthesis; chorismate biosynthesis; chorismate from D-erythrose 4-phosphate and phosphoenolpyruvate: step 6/7. Catalyzes the transfer of the enolpyruvyl moiety of phosphoenolpyruvate (PEP) to the 5-hydroxyl of shikimate-3-phosphate (S3P) to produce enolpyruvyl shikimate-3-phosphate and inorganic phosphate. This is 3-phosphoshikimate 1-carboxyvinyltransferase from Cronobacter sakazakii (strain ATCC BAA-894) (Enterobacter sakazakii).